The sequence spans 906 residues: Pre-mRNA-splicing factor prp1 (906 aa).

Disordered stretches follow at residues 50 to 129 (IEQR…VSSQ) and 142 to 164 (DEDWNNIPEPGDLTRKKRTKQPR). Basic and acidic residues predominate over residues 108-124 (REKQEQLQKEKYEKENP). Phosphoserine is present on Ser235. HAT repeat units lie at residues 258 to 290 (GDIRKARKLLQSVIETNPKHASGWVAAARLEEV), 322 to 353 (HPAAEAKVIIANAVKKLPKSVTLWLEAEKLEN), 354 to 384 (QAQHKKRIIKKALEFNPTSVSLWKEAVNLEE), 385 to 416 (EVDNARILLARAVELIPMSIDLWLALARLETY), 524 to 556 (KCIDCARAVFAFSLRVYPKSEKLWLRAVELEKL), 558 to 590 (GTTESVCSILEKAVESCPKAEILWLLYAKERKN), 592 to 624 (NDIAGARNILGRAFEYNSNSEEIWLAAVRIEFV), 693 to 725 (EQIELARDAYLAGTKVCPYSIPLWLLLAKLEEK), 726 to 758 (QSVIRARVVFDRAKVKNPKNEFLWLELIKMELR), 760 to 792 (GNISQVRAALAKALQECPSSGLLWTEAIWLEPR), and 824 to 856 (KKADKARSWFLKAVKADQDNGDVWCWFYKYSLE).

In terms of assembly, interacts with brr2 and spp42.

It is found in the nucleus. In terms of biological role, involved in pre-mRNA splicing. Interacts with prp6 and prp13. May also be involved in the regulation of the G0-G1/G2 transition. Required for pre-spliceosome formation, which is the first step of pre-mRNA splicing. This protein is associated with snRNP U5. Has a role in branch site-3' splice site selection. Associates with the branch site-3' splice 3'-exon region. The chain is Pre-mRNA-splicing factor prp1 (prp1) from Schizosaccharomyces pombe (strain 972 / ATCC 24843) (Fission yeast).